A 174-amino-acid chain; its full sequence is MNENEKPQITEQKENQSALDQLIKEKHELLEHLRQLKAQFENYKRDSLREKEQVLKNANEYFLVKLIPVLDDMERAFEEVRRSKSYKNFYSGMEIIYKKLWKILNDEGLFKIEPKEKFDPFEHEAVERVETDEKEEYSILKILENGYKFHKKIVKPVKVQVAVRPRGENGAKTE.

It belongs to the GrpE family. Homodimer.

Its subcellular location is the cytoplasm. In terms of biological role, participates actively in the response to hyperosmotic and heat shock by preventing the aggregation of stress-denatured proteins, in association with DnaK and GrpE. It is the nucleotide exchange factor for DnaK and may function as a thermosensor. Unfolded proteins bind initially to DnaJ; upon interaction with the DnaJ-bound protein, DnaK hydrolyzes its bound ATP, resulting in the formation of a stable complex. GrpE releases ADP from DnaK; ATP binding to DnaK triggers the release of the substrate protein, thus completing the reaction cycle. Several rounds of ATP-dependent interactions between DnaJ, DnaK and GrpE are required for fully efficient folding. This chain is Protein GrpE, found in Pseudothermotoga lettingae (strain ATCC BAA-301 / DSM 14385 / NBRC 107922 / TMO) (Thermotoga lettingae).